The primary structure comprises 490 residues: MNLAEICDNAKKGREYALLGNYDSSMVYYQGVIQQIQRHCQSVRDPAVKGKWQQVRQELLEEYEQVKSIVSTLESFKIDKPPDFPVSCQDEPVRDPAVWPPPVPAEHRAPPQIRRSNREVRPLRKDMAGVGARGPVGRAHPISKSEKPSTSRDKDNRARGKDDKGRKNMQDGASDGEIPKFDGAGYDKDLIEALERDIVSRNPSIHWDDIADLEEAKKLLREAVVLPMWMPDFFKGIRRPWKGVLMVGPPGTGKTMLAKAVATECGTTFFNVSSSTLTSKYRGESEKLVRLLFEMARFYAPTTIFIDEIDSICSRRGTSDEHEASRRVKSELLIQMDGVGGALENDDPSKMVMVLAATNFPWDIDEALRRRLEKRIYIPLPTAKGRAELLKINLREVELDPDIQLEDIAEKIEGYSGADITNVCRDASLMAMRRRINGLSPEEIRALSKEELQMPVTKGDFELALKKIAKSVSAADLEKYEKWMVEFGSA.

Methionine 1 bears the N-acetylmethionine mark. Residues 87–182 (SCQDEPVRDP…ASDGEIPKFD (96 aa)) are disordered. Positions 116–127 (SNREVRPLRKDM) are enriched in basic and acidic residues. Residues 128–139 (AGVGARGPVGRA) are compositionally biased toward low complexity. The segment covering 143–169 (SKSEKPSTSRDKDNRARGKDDKGRKNM) has biased composition (basic and acidic residues). Serine 174 is modified (phosphoserine). 248 to 255 (GPPGTGKT) contributes to the ATP binding site.

Belongs to the AAA ATPase family. Katanin p60 subunit A1 subfamily. A-like 1 sub-subfamily. As to quaternary structure, interacts with KATNB1 and KATNBL1.

Its subcellular location is the cytoplasm. It is found in the cytoskeleton. It localises to the spindle pole. The protein resides in the spindle. The enzyme catalyses n ATP + n H2O + a microtubule = n ADP + n phosphate + (n+1) alpha/beta tubulin heterodimers.. Its function is as follows. Regulates microtubule dynamics in Sertoli cells, a process that is essential for spermiogenesis and male fertility. Severs microtubules in an ATP-dependent manner, promoting rapid reorganization of cellular microtubule arrays. Has microtubule-severing activity in vitro. The polypeptide is Katanin p60 ATPase-containing subunit A-like 1 (Otolemur garnettii (Small-eared galago)).